The primary structure comprises 30 residues: Cyclotide hyen-K (30 aa).

The cyclopeptide (Gly-Asn) cross-link spans 1 to 30; it reads GIPCGESCIFIPCITTVVGCSCSNKVCYDN. Disulfide bonds link cysteine 4/cysteine 20, cysteine 8/cysteine 22, and cysteine 13/cysteine 27.

Post-translationally, this is a cyclic peptide. Detected in seeds (at protein level).

Its function is as follows. Probably participates in a plant defense mechanism. The protein is Cyclotide hyen-K of Pigea enneasperma (Spade flower).